The sequence spans 327 residues: F-box/LRR-repeat protein At3g58900 (327 aa).

One can recognise an F-box domain in the interval 1–47 (MDLFSSLPNELLYHILSFLSTKEAALTSVLSKRWRNLFAFVPYLEFD). LRR repeat units follow at residues 116–144 (DLFI…RVGS), 161–192 (KTLV…DMTN), 199–230 (NVTV…SFDA), 235–261 (YFYY…QINL), and 277–308 (EMLV…YLSP).

This chain is F-box/LRR-repeat protein At3g58900, found in Arabidopsis thaliana (Mouse-ear cress).